Reading from the N-terminus, the 359-residue chain is Biotin synthase (359 aa).

The interval 1–22 is disordered; it reads MQSTPLNFVPNAAKAPVTPGQA. In terms of domain architecture, Radical SAM core spans 58–285; it reads NAVQLSTLLS…KAMVRLSAGR (228 aa). Residues Cys-73, Cys-77, and Cys-80 each coordinate [4Fe-4S] cluster. The [2Fe-2S] cluster site is built by Cys-117, Cys-148, Cys-208, and Arg-280.

This sequence belongs to the radical SAM superfamily. Biotin synthase family. In terms of assembly, homodimer. The cofactor is [4Fe-4S] cluster. [2Fe-2S] cluster serves as cofactor.

It carries out the reaction (4R,5S)-dethiobiotin + (sulfur carrier)-SH + 2 reduced [2Fe-2S]-[ferredoxin] + 2 S-adenosyl-L-methionine = (sulfur carrier)-H + biotin + 2 5'-deoxyadenosine + 2 L-methionine + 2 oxidized [2Fe-2S]-[ferredoxin]. Its pathway is cofactor biosynthesis; biotin biosynthesis; biotin from 7,8-diaminononanoate: step 2/2. In terms of biological role, catalyzes the conversion of dethiobiotin (DTB) to biotin by the insertion of a sulfur atom into dethiobiotin via a radical-based mechanism. The protein is Biotin synthase of Ralstonia pickettii (strain 12J).